The chain runs to 572 residues: Vacuolar protein sorting-associated protein vps901 (572 aa).

2 stretches are compositionally biased toward basic and acidic residues: residues 1–31 (MDYP…EKPL) and 39–53 (DEQR…KNHD). The tract at residues 1-108 (MDYPSFHEDP…HENNPGQQEI (108 aa)) is disordered. Residues 69–80 (QYEQTDSSSDQE) show a composition bias toward polar residues. The segment covering 82–98 (MNEKQSLDKENRNDNIP) has biased composition (basic and acidic residues). A VPS9 domain is found at 219-357 (VEEDRVLSEK…IETLDCSSLT (139 aa)). Residues 430-502 (QIDTPESKEY…IVHEEQPVDD (73 aa)) form a disordered region. Residues 445 to 457 (PRGSSHSGSFTTD) show a composition bias toward polar residues. Residues 529–571 (REKAEAITALRAMFPAFDSEVIEVVLNAQQGRLSSSIDSLLEM) form the CUE domain.

Its function is as follows. Required for vacuolar protein sorting; may be required for the consumption of transport vesicles containing vacuolar protein precursors. Required for vacuolar fusion. The chain is Vacuolar protein sorting-associated protein vps901 (vps901) from Schizosaccharomyces pombe (strain 972 / ATCC 24843) (Fission yeast).